A 255-amino-acid chain; its full sequence is Epoxyqueuosine reductase QueH (255 aa).

The [4Fe-4S] cluster site is built by Cys44, Cys45, Cys128, and Cys131. Cys210 and Cys212 form a disulfide bridge.

This sequence belongs to the QueH family.

The enzyme catalyses epoxyqueuosine(34) in tRNA + AH2 = queuosine(34) in tRNA + A + H2O. It participates in tRNA modification; tRNA-queuosine biosynthesis. Functionally, catalyzes the conversion of epoxyqueuosine (oQ) to queuosine (Q), which is a hypermodified base found in the wobble positions of tRNA(Asp), tRNA(Asn), tRNA(His) and tRNA(Tyr). This Streptococcus pyogenes serotype M1 protein is Epoxyqueuosine reductase QueH.